Here is a 326-residue protein sequence, read N- to C-terminus: Type II methyltransferase M.CviAII (326 aa).

Belongs to the N(4)/N(6)-methyltransferase family.

It carries out the reaction a 2'-deoxyadenosine in DNA + S-adenosyl-L-methionine = an N(6)-methyl-2'-deoxyadenosine in DNA + S-adenosyl-L-homocysteine + H(+). Its function is as follows. An alpha subtype methylase that recognizes the double-stranded sequence 5'-CATG-3', methylates A-2 on both strands and protects the DNA from cleavage by the CviAII endonuclease. The sequence is that of Type II methyltransferase M.CviAII (CVIAIIM) from Paramecium bursaria Chlorella virus 1 (PBCV-1).